The chain runs to 419 residues: UPF0242 protein TC_0906 (419 aa).

It belongs to the UPF0242 family.

The chain is UPF0242 protein TC_0906 from Chlamydia muridarum (strain MoPn / Nigg).